The chain runs to 350 residues: Arabinogalactan endo-beta-1,4-galactanase (350 aa).

The N-terminal stretch at 1 to 16 is a signal peptide; that stretch reads MFASLLLAALPLLTHA. Residue asparagine 128 is glycosylated (N-linked (GlcNAc...) asparagine). The Proton donor role is filled by glutamate 152. Residue glutamate 262 is the Nucleophile of the active site.

The protein belongs to the glycosyl hydrolase 53 family. Post-translationally, glycosylated.

The enzyme catalyses The enzyme specifically hydrolyzes (1-&gt;4)-beta-D-galactosidic linkages in type I arabinogalactans.. This Aspergillus aculeatus protein is Arabinogalactan endo-beta-1,4-galactanase (gal1).